A 141-amino-acid polypeptide reads, in one-letter code: Nucleoside diphosphate kinase (141 aa).

ATP is bound by residues Lys11, Phe59, Arg87, Thr93, Arg104, and Asn114. His117 acts as the Pros-phosphohistidine intermediate in catalysis.

It belongs to the NDK family. As to quaternary structure, homotetramer. Mg(2+) is required as a cofactor.

The protein resides in the cytoplasm. It catalyses the reaction a 2'-deoxyribonucleoside 5'-diphosphate + ATP = a 2'-deoxyribonucleoside 5'-triphosphate + ADP. The enzyme catalyses a ribonucleoside 5'-diphosphate + ATP = a ribonucleoside 5'-triphosphate + ADP. Major role in the synthesis of nucleoside triphosphates other than ATP. The ATP gamma phosphate is transferred to the NDP beta phosphate via a ping-pong mechanism, using a phosphorylated active-site intermediate. The protein is Nucleoside diphosphate kinase of Methylibium petroleiphilum (strain ATCC BAA-1232 / LMG 22953 / PM1).